We begin with the raw amino-acid sequence, 170 residues long: Ribosome maturation factor RimM (170 aa).

The PRC barrel domain occupies 92–163 (KEGWYYFELE…RMDVELPPGL (72 aa)).

The protein belongs to the RimM family. Binds ribosomal protein uS19.

Its subcellular location is the cytoplasm. An accessory protein needed during the final step in the assembly of 30S ribosomal subunit, possibly for assembly of the head region. Essential for efficient processing of 16S rRNA. May be needed both before and after RbfA during the maturation of 16S rRNA. It has affinity for free ribosomal 30S subunits but not for 70S ribosomes. The polypeptide is Ribosome maturation factor RimM (Desulfitobacterium hafniense (strain Y51)).